The chain runs to 238 residues: Protein FEV (238 aa).

The segment at residues 47-127 (IQLWQFLLEL…HGKRYAYRFD (81 aa)) is a DNA-binding region (ETS). The may mediate active transcriptional repression stretch occupies residues 129–238 (QGLAQACQPP…AASHLGGHYH (110 aa)).

Belongs to the ETS family. As to expression, in brain, exclusively expressed in the major serotonergic neurons of the dorsal and median raphe nuclei located in the midbrain and pons. Also detected in prostate and small intestine.

The protein localises to the nucleus. In terms of biological role, functions as a transcriptional regulator. According to PubMed:12761502, it functions as a transcriptional repressor. Functions in the differentiation and the maintenance of the central serotonergic neurons. May play a role in cell growth. This chain is Protein FEV (FEV), found in Homo sapiens (Human).